The chain runs to 426 residues: MVVDKIQAIRGMNDVLPDSTSIWRFIEQTFINCLVRYGYKEIRFPIVENTQLFKRTIGEITDIVEKEMYTFNDLNGDSITLRPEGTAGCVRACIEHGLLHNQQQKLWYLGPMFRHERPQKGRYRQFNQFGVEALGITGTGIELELISICRRLWIDLGFSQSVQLQVNSLGEINERQKYRSILVEYLRDHFQILDEDSKRRLDKNPLRVLDSKNPDLQQLIQNAPKLIDVLGDDSREHFQSFCNGLETLGIPYSINPVLVRGLDYYGQTVFEWVTDQLGSQATICAGGRYDMLVEFLGGAPTPAVGFALGLERIFLLMETLNLLNESNNKQSIFIIATNEEAILKALVMAESIRNAHPSLDVITNTAGGGFKSQFKKADKSGARLALILGEDEIAKEYVSIKDLRTEIEQISIPMTKINEFLQDYLA.

The protein belongs to the class-II aminoacyl-tRNA synthetase family. In terms of assembly, homodimer.

It is found in the cytoplasm. The enzyme catalyses tRNA(His) + L-histidine + ATP = L-histidyl-tRNA(His) + AMP + diphosphate + H(+). The polypeptide is Histidine--tRNA ligase (Legionella pneumophila subsp. pneumophila (strain Philadelphia 1 / ATCC 33152 / DSM 7513)).